The chain runs to 130 residues: MARQIKKSGARKNKHNAVNGITHIKSTFNNTIVTITNLKGETLSWSSSGASGFKGAKKGTPFAAQTAAEKAAKQAMDQGMRQTEVLVNGPGAGRETAIRALQAAGLEITLIKDITPVPHNGCRPPKKRRV.

Belongs to the universal ribosomal protein uS11 family. Part of the 30S ribosomal subunit.

It is found in the plastid. It localises to the chloroplast. This is Small ribosomal subunit protein uS11c from Porphyra purpurea (Red seaweed).